We begin with the raw amino-acid sequence, 722 residues long: Peroxisomal bifunctional enzyme (722 aa).

The interval 1–281 (MAEYLRLPHS…FAEKSANKWS (281 aa)) is enoyl-CoA hydratase / isomerase. Blocked amino end (Ala) is present on Ala-2. At Lys-38 the chain carries N6-succinyllysine. Residue Gly-100 coordinates substrate. An N6-acetyllysine; alternate modification is found at Lys-173. Lys-173 is subject to N6-succinyllysine; alternate. N6-succinyllysine is present on Lys-182. Lys-190 and Lys-218 each carry N6-acetyllysine; alternate. N6-succinyllysine; alternate occurs at positions 190 and 218. Lys-241 carries the post-translational modification N6-succinyllysine. Lys-249 bears the N6-acetyllysine mark. Position 253 is an N6-succinyllysine (Lys-253). N6-acetyllysine; alternate is present on Lys-275. Lys-275 carries the post-translational modification N6-succinyllysine; alternate. N6-succinyllysine occurs at positions 279, 289, and 330. Residues 282-571 (TPSGASWKTA…DMLCEAGRFG (290 aa)) form a 3-hydroxyacyl-CoA dehydrogenase region. Residues Lys-345, Lys-359, and Lys-463 each carry the N6-acetyllysine modification. Lys-531 is subject to N6-succinyllysine. Thr-547 is subject to Phosphothreonine. N6-succinyllysine is present on Lys-576. An N6-acetyllysine; alternate mark is found at Lys-583, Lys-590, and Lys-709. 3 positions are modified to N6-succinyllysine; alternate: Lys-583, Lys-590, and Lys-709. Positions 720–722 (SKL) match the Microbody targeting signal motif. Residue Lys-721 is modified to N6-succinyllysine.

It in the N-terminal section; belongs to the enoyl-CoA hydratase/isomerase family. In the C-terminal section; belongs to the 3-hydroxyacyl-CoA dehydrogenase family. Monomer. In terms of processing, acetylated, leading to enhanced enzyme activity. Acetylation is enhanced by up to 80% after treatment either with trichostin A (TCA) or with nicotinamide (NAM) with highest increase on Lys-345. Acetylation and enzyme activity increased by about 1.5% on addition of fatty acids.

The protein resides in the peroxisome. The catalysed reaction is a (3S)-3-hydroxyacyl-CoA = a (2E)-enoyl-CoA + H2O. The enzyme catalyses a 4-saturated-(3S)-3-hydroxyacyl-CoA = a (3E)-enoyl-CoA + H2O. It carries out the reaction a (3Z)-enoyl-CoA = a 4-saturated (2E)-enoyl-CoA. It catalyses the reaction a (3E)-enoyl-CoA = a 4-saturated (2E)-enoyl-CoA. The catalysed reaction is a (3S)-3-hydroxyacyl-CoA + NAD(+) = a 3-oxoacyl-CoA + NADH + H(+). The enzyme catalyses (2S,3S)-3-hydroxy-2-methylbutanoyl-CoA = (2E)-2-methylbut-2-enoyl-CoA + H2O. It carries out the reaction (3E,5Z)-tetradecadienoyl-CoA = (2E,5Z)-tetradecadienoyl-CoA. It catalyses the reaction (3E,5Z)-octadienoyl-CoA = (2E,5Z)-octadienoyl-CoA. The catalysed reaction is (3S)-hydroxydecanoyl-CoA + NAD(+) = 3-oxodecanoyl-CoA + NADH + H(+). The enzyme catalyses (3E)-decenoyl-CoA = (2E)-decenoyl-CoA. It carries out the reaction (3Z)-hexenoyl-CoA = (2E)-hexenoyl-CoA. It catalyses the reaction (3E)-hexenoyl-CoA = (2E)-hexenoyl-CoA. The catalysed reaction is (3S)-hydroxydecanoyl-CoA = (2E)-decenoyl-CoA + H2O. The enzyme catalyses (3S)-hydroxyhexanoyl-CoA = (2E)-hexenoyl-CoA + H2O. It carries out the reaction (3S)-hydroxyhexadecanoyl-CoA + NAD(+) = 3-oxohexadecanoyl-CoA + NADH + H(+). It catalyses the reaction (3S)-hydroxyhexadecanoyl-CoA = (2E)-hexadecenoyl-CoA + H2O. The catalysed reaction is (2E)-hexadecenedioyl-CoA + H2O = (3S)-hydroxyhexadecanedioyl-CoA. The enzyme catalyses (3S)-hydroxyhexadecanedioyl-CoA + NAD(+) = 3-oxohexadecanedioyl-CoA + NADH + H(+). It participates in lipid metabolism; fatty acid beta-oxidation. With respect to regulation, enzyme activity enhanced by acetylation. Functionally, peroxisomal trifunctional enzyme possessing 2-enoyl-CoA hydratase, 3-hydroxyacyl-CoA dehydrogenase, and delta 3, delta 2-enoyl-CoA isomerase activities. Catalyzes two of the four reactions of the long chain fatty acids peroxisomal beta-oxidation pathway. Can also use branched-chain fatty acids such as 2-methyl-2E-butenoyl-CoA as a substrate, which is hydrated into (2S,3S)-3-hydroxy-2-methylbutanoyl-CoA. Optimal isomerase for 2,5 double bonds into 3,5 form isomerization in a range of enoyl-CoA species. Also able to isomerize both 3-cis and 3-trans double bonds into the 2-trans form in a range of enoyl-CoA species. Regulates the amount of medium-chain dicarboxylic fatty acids which are essential regulators of all fatty acid oxidation pathways. Also involved in the degradation of long-chain dicarboxylic acids through peroxisomal beta-oxidation. The protein is Peroxisomal bifunctional enzyme of Rattus norvegicus (Rat).